The primary structure comprises 424 residues: Zinc metalloproteinase-disintegrin-like brevilysin H2b (424 aa).

Gln1 bears the Pyrrolidone carboxylic acid mark. The Peptidase M12B domain occupies 9-207; it reads RYVKLAIVAD…YKPQCILNEP (199 aa). An N-linked (GlcNAc...) asparagine glycan is attached at Asn69. Asp96 is a binding site for Ca(2+). 3 disulfides stabilise this stretch: Cys120-Cys202, Cys164-Cys186, and Cys166-Cys169. His145 contributes to the Zn(2+) binding site. Glu146 is a catalytic residue. Zn(2+)-binding residues include His149 and His155. Asn185 carries an N-linked (GlcNAc...) asparagine glycan. Residues Cys202, Asn205, Val217, Asn220, Leu222, Glu224, Glu227, and Asp230 each coordinate Ca(2+). Residues 215 to 301 enclose the Disintegrin domain; that stretch reads PPVCGNELLE…DCPTDDLQRN (87 aa). 14 disulfides stabilise this stretch: Cys218–Cys247, Cys229–Cys242, Cys231–Cys237, Cys241–Cys264, Cys255–Cys261, Cys260–Cys286, Cys273–Cys293, Cys280–Cys312, Cys305–Cys317, Cys324–Cys374, Cys339–Cys385, Cys352–Cys362, Cys369–Cys411, and Cys405–Cys417. Residues 279–281 carry the D/ECD-tripeptide motif; the sequence is DCD. Ca(2+) is bound by residues Asp281, Glu284, and Asp296.

This sequence belongs to the venom metalloproteinase (M12B) family. P-III subfamily. P-IIIa sub-subfamily. As to quaternary structure, monomer. It depends on Zn(2+) as a cofactor. Glycosylated. Expressed by the venom gland.

It is found in the secreted. Its proteolytic activity is inhibited by EDTA, TPEN, 1,10-phenanthroline, and some thiol compounds, but is enhanced by alkaline earth metal ions (Mg2+, Ca2+, Sr2+, and Ba2+). Its activity is not modulated by urea (4 M). Its function is as follows. Non-hemorrhagic metalloproteinase that degrades fibrinogen. The alpha chain (FGA) is rapidly degraded, the beta chain (FGB) is degraded very slowly, while the gamma chain is left intact. Shows a prefential cleavage at X-Leu bonds. Cleaves insulin B chain at '29-His-|-Leu-30', '33-Ser-|-His-34', '38-Ala-|-Leu-39' and '40-Tyr-|-Leu-41' bonds. The protein is Zinc metalloproteinase-disintegrin-like brevilysin H2b of Gloydius brevicauda (Korean slamosa snake).